A 375-amino-acid chain; its full sequence is MSLEAFSPSRALSIGVELELQLVGTHDYDLVGAADDMLRLTAGLDLPGDIKPEMTDSMIEISTGVCDNHAMVLTQLDGLRAALVDIARRLNVGICGGGTHGFQDWGERRIFDNPRFHYLHELYGYLAKQFTVFGQHVHIGCPGPDAALYLVHGLSRYIPHLIALSASSPFLQGQDTGFQSSRLNAVFAFPLSGRAPFALSWSDFGAYFDKMSATGVVSSMKDFYWDIRPKPEYGTVEVRVMDTPLTVERAAALAAYIQALARYLMVERPIQPREDDYLVYTFNRFQACRFGYAGTYVDPENHTHCSIAEALEASFTRIEQHAIELGAEAAIGRLRADVASGRNDAWWLRGQLGPQVTLPEVVMAQCRRWMNGEGM.

This sequence belongs to the glutamate--cysteine ligase type 2 family. YbdK subfamily.

It carries out the reaction L-cysteine + L-glutamate + ATP = gamma-L-glutamyl-L-cysteine + ADP + phosphate + H(+). In terms of biological role, ATP-dependent carboxylate-amine ligase which exhibits weak glutamate--cysteine ligase activity. In Azoarcus sp. (strain BH72), this protein is Putative glutamate--cysteine ligase 2.